Here is a 501-residue protein sequence, read N- to C-terminus: Lysine--tRNA ligase (501 aa).

Positions 411 and 418 each coordinate Mg(2+).

Belongs to the class-II aminoacyl-tRNA synthetase family. In terms of assembly, homodimer. The cofactor is Mg(2+).

It is found in the cytoplasm. It carries out the reaction tRNA(Lys) + L-lysine + ATP = L-lysyl-tRNA(Lys) + AMP + diphosphate. The polypeptide is Lysine--tRNA ligase (Pseudomonas aeruginosa (strain LESB58)).